The chain runs to 438 residues: Trigger factor (438 aa).

One can recognise a PPIase FKBP-type domain in the interval 163–248 (GDIITIDYEG…VKEIKRKELA (86 aa)).

This sequence belongs to the FKBP-type PPIase family. Tig subfamily.

It is found in the cytoplasm. The catalysed reaction is [protein]-peptidylproline (omega=180) = [protein]-peptidylproline (omega=0). Functionally, involved in protein export. Acts as a chaperone by maintaining the newly synthesized protein in an open conformation. Functions as a peptidyl-prolyl cis-trans isomerase. The sequence is that of Trigger factor from Desulforudis audaxviator (strain MP104C).